A 72-amino-acid polypeptide reads, in one-letter code: UPF0270 protein KPK_0377 (72 aa).

The protein belongs to the UPF0270 family.

This Klebsiella pneumoniae (strain 342) protein is UPF0270 protein KPK_0377.